The primary structure comprises 378 residues: Quinolinate synthase (378 aa).

Positions 59 and 80 each coordinate iminosuccinate. Cys125 is a binding site for [4Fe-4S] cluster. Residues 151–153 and Ser168 contribute to the iminosuccinate site; that span reads YAN. Cys212 contributes to the [4Fe-4S] cluster binding site. Residues 238 to 240 and Thr255 each bind iminosuccinate; that span reads HPE. Cys309 serves as a coordination point for [4Fe-4S] cluster.

This sequence belongs to the quinolinate synthase family. Type 1 subfamily. It depends on [4Fe-4S] cluster as a cofactor.

The protein localises to the cytoplasm. It carries out the reaction iminosuccinate + dihydroxyacetone phosphate = quinolinate + phosphate + 2 H2O + H(+). It participates in cofactor biosynthesis; NAD(+) biosynthesis; quinolinate from iminoaspartate: step 1/1. Its function is as follows. Catalyzes the condensation of iminoaspartate with dihydroxyacetone phosphate to form quinolinate. The chain is Quinolinate synthase from Burkholderia thailandensis (strain ATCC 700388 / DSM 13276 / CCUG 48851 / CIP 106301 / E264).